A 969-amino-acid polypeptide reads, in one-letter code: Aspartic protease 5 (969 aa).

An N-terminal signal peptide occupies residues 1-22 (MEAGAMGGSSFLSFSSGPSAET). Residues 1-45 (MEAGAMGGSSFLSFSSGPSAETSPSSLSPPTSSSPSPSPQLVSDS) show a composition bias toward low complexity. Disordered regions lie at residues 1–65 (MEAG…SSRT), 79–104 (ENEA…AGHL), 128–149 (SSAT…RSSS), 173–193 (SSSS…SACG), and 311–382 (FLSL…DLPR). Over 23–820 (SPSSLSPPTS…PEGLPLSPQQ (798 aa)) the chain is Lumenal. Residues 311–324 (FLSLSSSPRSLASD) show a composition bias toward low complexity. Positions 335 to 355 (QSREQRGEREGERQRPDKGEE) are enriched in basic and acidic residues. In terms of domain architecture, Peptidase A1 spans 413-758 (YFLDILVGTP…DREQDRVGFA (346 aa)). Asp-431 is an active-site residue. The segment at 608–635 (PPESESTPATEALRPVAGESASRRISEK) is disordered. Asp-682 is a catalytic residue. The tract at residues 768 to 794 (DQRPRGPDSGDGPKGRPTAPFTVPPLR) is disordered. Positions 769–781 (QRPRGPDSGDGPK) are enriched in basic and acidic residues. The helical transmembrane segment at 821 to 841 (LWVAAALVVVAILIAVTVILL) threads the bilayer. Residues 842 to 969 (HTIKRPSRSS…TLLDLPLGGE (128 aa)) lie on the Cytoplasmic side of the membrane. Residues 922-969 (EDDGDFFGDDSVPSAEEQETAPSLSLREESSPFSASQSTLLDLPLGGE) form a disordered region. Positions 952–961 (SPFSASQSTL) are enriched in polar residues.

It belongs to the peptidase A1 family. Post-translationally, may be auto-cleaved to produce a 55 kDa form.

The protein localises to the golgi apparatus membrane. Its function is as follows. In tachyzoites, plays an essential role in the export of several dense granule proteins into the host cell by cleaving the localization motif RRLxx (termed Toxoplasma export element (TEXEL)) located downstream of the N-terminal secretory signal sequence. However, can also regulate the export of proteins that lack the TEXEL motif, such as GRA24. Requires Arg at P3 and P2, and Leu at P1 in the substrate TEXEL motif and, specifically, cleaves after Leu. Cleaves GRA16; proteolytic cleavage is essential for the correct trafficking of GRA16 from the parasite into the infected host nucleus. Cleaves GRA19 and GRA20. Cleaves MYR1. Cleaves LCAT, GRA44, GRA46, GRA46, ROP35/WNG1 and ROP34/WNG2. By regulating the export of dense granule proteins into the host cell, regulates multiple processes during tachyzoite infection of host cells, including recruitment of host mitochondria to the parasitophorous vacuole (PV), formation of the nanotubular network (NTN) or intravacuolar network (IVN) which are membranous tubules that bud from the PV membrane into the vacuolar lumen and, up-regulation of host cell genes to facilitate the parasite infection and modulate the host innate immune response. At the bradyzoite stage, also involved in the formation of the cyst wall. The polypeptide is Aspartic protease 5 (Toxoplasma gondii).